A 239-amino-acid chain; its full sequence is MAFTTTAVVAPRGAKITGQSSTCAIQNGKTVAVGTSKQVGSFKPVFAAAKPAKETTFSVSCSAASDDVPDMGKRKLMNLLLLGAIAGPVAGAGGPFVSFLVPPKAGGGAGAGQAAKDALGNDVKVSSWLETHKPGDRSLAQGLKGDATYLIVKEDGTLENYGLNAVCTHLGCVVPWNASENKFMCPCHGSQYDRTGKVVRGPAPLSLALAHVSVLEDGVVAFEPWTETDFRTNTAPWWK.

A cyanelle-targeting transit peptide spans 1-60 (MAFTTTAVVAPRGAKITGQSSTCAIQNGKTVAVGTSKQVGSFKPVFAAAKPAKETTFSVS). A helical transmembrane segment spans residues 81–101 (LLGAIAGPVAGAGGPFVSFLV). Positions 125–221 (VSSWLETHKP…VSVLEDGVVA (97 aa)) constitute a Rieske domain. [2Fe-2S] cluster-binding residues include C167, H169, C185, and H188. C172 and C187 are oxidised to a cystine.

This sequence belongs to the Rieske iron-sulfur protein family. The 4 large subunits of the cytochrome b6-f complex are cytochrome b6, subunit IV (17 kDa polypeptide, petD), cytochrome f and the Rieske protein, while the 4 small subunits are petG, petL, petM and petN. The complex functions as a dimer. Requires [2Fe-2S] cluster as cofactor.

It is found in the plastid. The protein resides in the cyanelle thylakoid membrane. The catalysed reaction is 2 oxidized [plastocyanin] + a plastoquinol + 2 H(+)(in) = 2 reduced [plastocyanin] + a plastoquinone + 4 H(+)(out). Its function is as follows. Component of the cytochrome b6-f complex, which mediates electron transfer between photosystem II (PSII) and photosystem I (PSI), cyclic electron flow around PSI, and state transitions. The polypeptide is Cytochrome b6-f complex iron-sulfur subunit 1, cyanelle (petC-1) (Cyanophora paradoxa).